A 232-amino-acid polypeptide reads, in one-letter code: Phosphatidylserine decarboxylase proenzyme (232 aa).

The Schiff-base intermediate with substrate; via pyruvic acid role is filled by serine 190. A Pyruvic acid (Ser); by autocatalysis modification is found at serine 190.

This sequence belongs to the phosphatidylserine decarboxylase family. PSD-A subfamily. As to quaternary structure, heterodimer of a large membrane-associated beta subunit and a small pyruvoyl-containing alpha subunit. The cofactor is pyruvate. Post-translationally, is synthesized initially as an inactive proenzyme. Formation of the active enzyme involves a self-maturation process in which the active site pyruvoyl group is generated from an internal serine residue via an autocatalytic post-translational modification. Two non-identical subunits are generated from the proenzyme in this reaction, and the pyruvate is formed at the N-terminus of the alpha chain, which is derived from the carboxyl end of the proenzyme. The post-translation cleavage follows an unusual pathway, termed non-hydrolytic serinolysis, in which the side chain hydroxyl group of the serine supplies its oxygen atom to form the C-terminus of the beta chain, while the remainder of the serine residue undergoes an oxidative deamination to produce ammonia and the pyruvoyl prosthetic group on the alpha chain.

Its subcellular location is the cell membrane. The enzyme catalyses a 1,2-diacyl-sn-glycero-3-phospho-L-serine + H(+) = a 1,2-diacyl-sn-glycero-3-phosphoethanolamine + CO2. The protein operates within phospholipid metabolism; phosphatidylethanolamine biosynthesis; phosphatidylethanolamine from CDP-diacylglycerol: step 2/2. Catalyzes the formation of phosphatidylethanolamine (PtdEtn) from phosphatidylserine (PtdSer). Important for establishment of root nodule symbiosis with the host plant. The sequence is that of Phosphatidylserine decarboxylase proenzyme from Rhizobium meliloti (strain 1021) (Ensifer meliloti).